The chain runs to 1135 residues: Topless-related protein 4 (1135 aa).

The 33-residue stretch at 4 to 36 (LSRELVFLILQFLDEEKFKDTVHRLEKESGFFF) folds into the LisH domain. The region spanning 34–92 (FFFNMRYFEDSVTAGEWDDVEKYLSGFTKVDDNRYSMKIFFEIRKQKYLEALDKKDHAK) is the CTLH domain. Residue Ser214 is modified to Phosphoserine. Residues 281 to 303 (LKRERPRSPPTNSLSMDYQTADS) are disordered. Over residues 290 to 303 (PTNSLSMDYQTADS) the composition is skewed to polar residues. 12 WD repeats span residues 355-395 (SQGS…KLVS), 417-456 (EYTAAVNRVVWSPDGGLLGVAYSKHIVHIYSYHGGEDLRN), 462-503 (AHAG…KLHT), 506-547 (GHEA…SRVD), 550-593 (APGR…VKRT), 597-636 (LGKRSVGVVQFDTMKNKFLVAGDEFQVKFWDMDSVDLLSS), 638-680 (AAEG…RILH), 776-815 (LLPARVVKLIYTNSGGAILALAENAAHKLWKWQKSERNLL), 843-881 (NKEDVVPCFALSKNDSYVMSASGGKISLFNMMTFKTMTT), 884-924 (APPP…VKSK), 927-966 (GHQKRVTGLAFSNVLNVLVSSGADSQLCVWSMDGWEKQAS), and 1020-1059 (ESSGSVTDAVYSCDSQSIYAAFDDGSVSILTATTLQLKCR). The segment at 1095–1135 (DGGVHVIEPPGPEGKWGISAPPENGAGPSVSSAPGSDQQPR) is disordered. Over residues 1119–1135 (GAGPSVSSAPGSDQQPR) the composition is skewed to low complexity.

In terms of assembly, tetramer. Interacts with WUS (via the C-terminal domain). Interacts with SPL (via EAR motif). Interacts with SPEAR3/TIE1. Binds to and corepresses GAF1/IDD2 at the promoter of GA20OX2 gene.

It is found in the nucleus. Transcription corepressor of Zinc finger transcription factors GAF1/IDD2 and ENY/IDD1 in regulation of gibberellin homeostasis and signaling. The protein is Topless-related protein 4 (TPR4) of Arabidopsis thaliana (Mouse-ear cress).